The sequence spans 293 residues: Outer membrane protein assembly factor BamD (293 aa).

Positions 1–26 are cleaved as a signal peptide; it reads MIQRPTFFSPIHLLAVLLATFILITG. Cys-27 carries N-palmitoyl cysteine lipidation. Cys-27 is lipidated: S-diacylglycerol cysteine.

The protein belongs to the BamD family. As to quaternary structure, part of the Bam complex.

The protein localises to the cell outer membrane. Its function is as follows. Part of the outer membrane protein assembly complex, which is involved in assembly and insertion of beta-barrel proteins into the outer membrane. The polypeptide is Outer membrane protein assembly factor BamD (Xylella fastidiosa (strain Temecula1 / ATCC 700964)).